Here is a 525-residue protein sequence, read N- to C-terminus: GMP synthase [glutamine-hydrolyzing] (525 aa).

The Glutamine amidotransferase type-1 domain maps to 9–207; that stretch reads RILILDFGSQ…VLDICGCAAL (199 aa). Residue Cys86 is the Nucleophile of the active site. Catalysis depends on residues His181 and Glu183. The region spanning 208–400 is the GMPS ATP-PPase domain; the sequence is WTPSNIVDDA…LGLPYDMVYR (193 aa). 235–241 contacts ATP; it reads SGGVDSS.

Homodimer.

The enzyme catalyses XMP + L-glutamine + ATP + H2O = GMP + L-glutamate + AMP + diphosphate + 2 H(+). It functions in the pathway purine metabolism; GMP biosynthesis; GMP from XMP (L-Gln route): step 1/1. Catalyzes the synthesis of GMP from XMP. This chain is GMP synthase [glutamine-hydrolyzing], found in Pseudomonas aeruginosa (strain LESB58).